Consider the following 20-residue polypeptide: Thylakoid lumenal 20 kDa protein (20 aa).

The tract at residues 1-20 is disordered; it reads RDVDVGSFLPKSPSDPSMVL.

It is found in the plastid. It localises to the chloroplast thylakoid lumen. This is Thylakoid lumenal 20 kDa protein from Spinacia oleracea (Spinach).